The primary structure comprises 265 residues: 3-methyl-2-oxobutanoate hydroxymethyltransferase (265 aa).

Positions 46 and 85 each coordinate Mg(2+). 3-methyl-2-oxobutanoate is bound by residues 46-47 (DS), Asp85, and Lys114. Mg(2+) is bound at residue Glu116. Glu183 serves as the catalytic Proton acceptor.

Belongs to the PanB family. As to quaternary structure, homodecamer; pentamer of dimers. Mg(2+) is required as a cofactor.

The protein resides in the cytoplasm. It carries out the reaction 3-methyl-2-oxobutanoate + (6R)-5,10-methylene-5,6,7,8-tetrahydrofolate + H2O = 2-dehydropantoate + (6S)-5,6,7,8-tetrahydrofolate. It participates in cofactor biosynthesis; coenzyme A biosynthesis. Functionally, catalyzes the reversible reaction in which hydroxymethyl group from 5,10-methylenetetrahydrofolate is transferred onto alpha-ketoisovalerate to form ketopantoate. In Caldivirga maquilingensis (strain ATCC 700844 / DSM 13496 / JCM 10307 / IC-167), this protein is 3-methyl-2-oxobutanoate hydroxymethyltransferase.